The following is a 309-amino-acid chain: NAD-dependent protein deacylase sirtuin-5, mitochondrial (309 aa).

The N-terminal 35 residues, 1-35 (MILLPFHTRRLVSHVYCGLKPASKKKGIALEMARP), are a transit peptide targeting the mitochondrion. The 271-residue stretch at 36–306 (SSNLADFREA…PPAIARHETE (271 aa)) folds into the Deacetylase sirtuin-type domain. 57-76 (GAGVSAESGVPTFRGAGGYW) contacts NAD(+). The substrate site is built by Tyr101 and Arg104. An NAD(+)-binding site is contributed by 139–142 (QNID). The active-site Proton acceptor is His157. Residues Cys165, Cys168, Cys206, and Cys211 each coordinate Zn(2+). NAD(+)-binding positions include 248 to 250 (GTS), 274 to 276 (NME), and Cys292.

This sequence belongs to the sirtuin family. Class III subfamily. Requires Zn(2+) as cofactor.

The protein resides in the mitochondrion. It is found in the cytoplasm. It localises to the cytosol. Its subcellular location is the nucleus. The catalysed reaction is N(6)-malonyl-L-lysyl-[protein] + NAD(+) + H2O = 2''-O-malonyl-ADP-D-ribose + nicotinamide + L-lysyl-[protein]. The enzyme catalyses N(6)-succinyl-L-lysyl-[protein] + NAD(+) + H2O = 2''-O-succinyl-ADP-D-ribose + nicotinamide + L-lysyl-[protein]. It catalyses the reaction N(6)-glutaryl-L-lysyl-[protein] + NAD(+) + H2O = 2''-O-glutaryl-ADP-D-ribose + nicotinamide + L-lysyl-[protein]. Functionally, NAD-dependent lysine demalonylase, desuccinylase and deglutarylase that specifically removes malonyl, succinyl and glutaryl groups on target proteins. Has weak NAD-dependent protein deacetylase activity; however this activity may not be physiologically relevant in vivo. This chain is NAD-dependent protein deacylase sirtuin-5, mitochondrial (sirt5), found in Xenopus tropicalis (Western clawed frog).